A 343-amino-acid polypeptide reads, in one-letter code: MASGTIPVQNEEIIKSQVNTVRIYIDGAYGIGKSLTAKYLVRADENRPGYTYYFPEPMLYWRSLFETDVVGGIYAVQDRKRRGELSAEDAAYITAHYQARFAAPYLLLHSRLSTITGYQKVVCEEHPDVTLIIDRHPLASLVCFPLARYFVGDMTLGSVLSLMATLPREPPGGNLVVTTLNIEEHLKRLRGRSRTGEQIDMKLIHALRNVYMMLVHTKKFLTKNTSWRDGWGKLKIFSHYERNRLVETTIVSDSTESDLCDTLFSVFKARELSDQNGDLLDMHAWVLDGLMETLQNLQIFTLNLEGTPDECAAALGALRQDMDMTFIAACDMHRISEALTIYH.

27-34 (GAYGIGKS) serves as a coordination point for ATP. Glutamate 56 serves as the catalytic Proton acceptor. Residues tyrosine 74 and glutamine 98 each contribute to the substrate site. Arginine 188 contacts ATP. Residue arginine 194 coordinates substrate.

It belongs to the herpesviridae thymidine kinase family. As to quaternary structure, homodimer.

The enzyme catalyses thymidine + ATP = dTMP + ADP + H(+). Functionally, catalyzes the transfer of the gamma-phospho group of ATP to thymidine to generate dTMP in the salvage pathway of pyrimidine synthesis. The dTMP serves as a substrate for DNA polymerase during viral DNA replication. Allows the virus to be reactivated and to grow in non-proliferative cells lacking a high concentration of phosphorylated nucleic acid precursors. The protein is Thymidine kinase of Felidae (cat family).